Here is a 172-residue protein sequence, read N- to C-terminus: Cytidylate kinase (172 aa).

4–12 (GPPGSGKST) serves as a coordination point for ATP.

Belongs to the cytidylate kinase family. Type 2 subfamily.

Its subcellular location is the cytoplasm. It carries out the reaction CMP + ATP = CDP + ADP. The enzyme catalyses dCMP + ATP = dCDP + ADP. This Aeropyrum pernix (strain ATCC 700893 / DSM 11879 / JCM 9820 / NBRC 100138 / K1) protein is Cytidylate kinase (cmk).